Reading from the N-terminus, the 304-residue chain is MRSSSTLLIAFGLFLASMSVEAIIRPGYGSGGHRPPSSYHGGHHNDDDCTTKPPKSTSTPSTSTSTPTTTTTTTTTTTTTPTTTTTTTTTTTPEPTTTKVKVCPQGYTSFLRTPAADNSFTSEWCMQLIWSPRQPMPINNASALCQASNTEAVVTTFANEEELNVFSLQMAQQFDRVGPATRGAIAVDGRRIAACVSRDRGILDSEECNGTNSFVMVDKHTSPGFTWSKWATNEPSANAWTYDIEQCIQFTVYPALTGPGDNPYNMLNRNNKFNDIYCNMDKAPNEPTNTAYWNFGALCGVLPS.

Positions 1–19 (MRSSSTLLIAFGLFLASMS) are cleaved as a signal peptide. Residues 29 to 100 (GSGGHRPPSS…TTPEPTTTKV (72 aa)) are disordered. The segment covering 51–99 (TKPPKSTSTPSTSTSTPTTTTTTTTTTTTTPTTTTTTTTTTTPEPTTTK) has biased composition (low complexity).

This Caenorhabditis elegans protein is C-type lectin domain-containing protein 141 (clec-141).